Reading from the N-terminus, the 332-residue chain is Eukaryotic translation initiation factor 3 subunit I (332 aa).

4 WD repeats span residues 8–47 (GHERALTQVKYNGDGDIIFSVSKDHVDADSHNGERIGTYH), 48–87 (GHQGALWTVDVNPDSTLLATGGADNTLRLWEVQTGKLLHT), 144–182 (DESKATVAGFSYLAKYIISGHEDGSVTQWDGKTGELLSS), and 279–318 (GHFGPLNYVAVHPQGTGYCSGGEDGYVRVHHFDKPYFDFM).

The protein belongs to the eIF-3 subunit I family. Component of the eukaryotic translation initiation factor 3 (eIF-3) complex.

It is found in the cytoplasm. Its function is as follows. Component of the eukaryotic translation initiation factor 3 (eIF-3) complex, which is involved in protein synthesis of a specialized repertoire of mRNAs and, together with other initiation factors, stimulates binding of mRNA and methionyl-tRNAi to the 40S ribosome. The eIF-3 complex specifically targets and initiates translation of a subset of mRNAs involved in cell proliferation. This chain is Eukaryotic translation initiation factor 3 subunit I, found in Phaeosphaeria nodorum (strain SN15 / ATCC MYA-4574 / FGSC 10173) (Glume blotch fungus).